A 747-amino-acid chain; its full sequence is Protein neuralized (747 aa).

The 155-residue stretch at 97–251 folds into the NHR 1 domain; sequence PLQFHTVHGD…NCTGIEFLDA (155 aa). Residues 280–292 show a composition bias toward low complexity; the sequence is LPQQQQQLPQQQL. A disordered region spans residues 280–309; sequence LPQQQQQLPQQQLTAHHPLQQSRRSLPGGT. Residues 359–514 form the NHR 2 domain; it reads PVPFHITKGR…STQSLRMFRQ (156 aa). The segment at 694–735 adopts an RING-type zinc-finger fold; the sequence is CTICYENPIDSVLYMCGHMCMCYDCAIEQWRGVGGGQCPLCR.

It is found in the nucleus. Involved in neurogenesis. Interacts with other neurogenic proteins in the specification of the neuroblast versus epidermoblast cell fate. The protein is Protein neuralized (neur) of Drosophila virilis (Fruit fly).